Consider the following 102-residue polypeptide: Glutaredoxin 1 (102 aa).

A Glutaredoxin domain is found at Met1–Lys96. A disulfide bridge links Cys17 with Cys20.

It belongs to the glutaredoxin family. In terms of assembly, monomer.

The protein localises to the cytoplasm. In terms of biological role, has a glutathione-disulfide oxidoreductase activity in the presence of NADPH and glutathione reductase. Reduces low molecular weight disulfides and proteins. This Rickettsia felis (strain ATCC VR-1525 / URRWXCal2) (Rickettsia azadi) protein is Glutaredoxin 1 (grxC1).